Here is a 146-residue protein sequence, read N- to C-terminus: Large ribosomal subunit protein uL15 (146 aa).

Residues 1 to 10 (MTLKLHDLRP) are compositionally biased toward basic and acidic residues. Residues 1 to 41 (MTLKLHDLRPARGSKIARTRVGRGDGSKGKTAGRGTKGTRA) are disordered.

It belongs to the universal ribosomal protein uL15 family. Part of the 50S ribosomal subunit.

Binds to the 23S rRNA. The chain is Large ribosomal subunit protein uL15 from Mycobacterium tuberculosis (strain ATCC 25177 / H37Ra).